The chain runs to 457 residues: Putative metabolite transport protein YwtG (457 aa).

Helical transmembrane passes span 7–27, 38–58, 75–95, 97–117, 136–156, 163–183, 240–260, 276–296, 309–329, 340–360, 377–397, and 400–420; these read IWLYFFGALGGALYGYDTGVI, LGLNAFTEGLVVSSLLVGAIL, AIMAAALLFCIGGLGVALAPN, GVMVLFRIILGLAVGTSTTIV, LNQLMITVGILLSYIVNYIFA, WMLGLAAVPSLLLLIGILFMP, ALIAGLGLAFLQQFIGTNTII, ASILGTVGIGTVNVLMTLVAI, LFGNAGMVISLIVLALVNLFF, VICLGVFIVVFAVSWGPVVWV, VSTLMLHVGTLIVSLTYPILM, and IGISYLFLIYAAIGIMAFLFV. Residues 438-457 are disordered; sequence DLRDKNGQGGAAGKQQTVGT.

The protein belongs to the major facilitator superfamily. Sugar transporter (TC 2.A.1.1) family.

The protein localises to the cell membrane. The sequence is that of Putative metabolite transport protein YwtG (ywtG) from Bacillus subtilis (strain 168).